A 276-amino-acid polypeptide reads, in one-letter code: Undecaprenyl-diphosphatase 1 (276 aa).

A run of 7 helical transmembrane segments spans residues 4–24 (ILIC…FLPV), 45–62 (KTFD…VCWE), 83–103 (FTLN…LFEK), 108–128 (VLFS…IILW), 187–207 (VATE…TLYE), 217–237 (VDSL…AFVC), and 252–272 (VFAW…YSGW).

It belongs to the UppP family.

The protein localises to the cell inner membrane. The catalysed reaction is di-trans,octa-cis-undecaprenyl diphosphate + H2O = di-trans,octa-cis-undecaprenyl phosphate + phosphate + H(+). In terms of biological role, catalyzes the dephosphorylation of undecaprenyl diphosphate (UPP). Confers resistance to bacitracin. The sequence is that of Undecaprenyl-diphosphatase 1 from Burkholderia ambifaria (strain ATCC BAA-244 / DSM 16087 / CCUG 44356 / LMG 19182 / AMMD) (Burkholderia cepacia (strain AMMD)).